The primary structure comprises 325 residues: Eukaryotic translation initiation factor 3 subunit I (325 aa).

WD repeat units follow at residues 8–47 (GHERSITQIKYNREGDLLFTVAKDPIVNVWYSVNGERLGT), 50–91 (GHTG…ALLK), 144–183 (CNDSKITSAVWGPLGECIIAGHESGELNQYSAKSGEVLVN), and 186–225 (EHSRQINDIQLSRDMTMFVTASKDNTAKLFDSTTLEHQKT). The residue at position 219 (threonine 219) is a Phosphothreonine. Lysine 264 bears the N6-acetyllysine mark. A Glycyl lysine isopeptide (Lys-Gly) (interchain with G-Cter in ubiquitin) cross-link involves residue lysine 282. The WD 5 repeat unit spans residues 283–324 (GHFGLINSVAFHPDGKSYSSGGEDGYVRIHYFDPQYFEFEFE). Tyrosine 308 carries the post-translational modification Phosphotyrosine.

It belongs to the eIF-3 subunit I family. In terms of assembly, component of the eukaryotic translation initiation factor 3 (eIF-3) complex, which is composed of 13 subunits: EIF3A, EIF3B, EIF3C, EIF3D, EIF3E, EIF3F, EIF3G, EIF3H, EIF3I, EIF3J, EIF3K, EIF3L and EIF3M. The eIF-3 complex appears to include 3 stable modules: module A is composed of EIF3A, EIF3B, EIF3G and EIF3I; module B is composed of EIF3F, EIF3H, and EIF3M; and module C is composed of EIF3C, EIF3D, EIF3E, EIF3K and EIF3L. EIF3C of module C binds EIF3B of module A and EIF3H of module B, thereby linking the three modules. EIF3J is a labile subunit that binds to the eIF-3 complex via EIF3B. The eIF-3 complex interacts with RPS6KB1 under conditions of nutrient depletion. Mitogenic stimulation leads to binding and activation of a complex composed of MTOR and RPTOR, leading to phosphorylation and release of RPS6KB1 and binding of EIF4B to eIF-3. In terms of processing, phosphorylated by TGF-beta type II receptor.

It localises to the cytoplasm. Component of the eukaryotic translation initiation factor 3 (eIF-3) complex, which is required for several steps in the initiation of protein synthesis. The eIF-3 complex associates with the 40S ribosome and facilitates the recruitment of eIF-1, eIF-1A, eIF-2:GTP:methionyl-tRNAi and eIF-5 to form the 43S pre-initiation complex (43S PIC). The eIF-3 complex stimulates mRNA recruitment to the 43S PIC and scanning of the mRNA for AUG recognition. The eIF-3 complex is also required for disassembly and recycling of post-termination ribosomal complexes and subsequently prevents premature joining of the 40S and 60S ribosomal subunits prior to initiation. The eIF-3 complex specifically targets and initiates translation of a subset of mRNAs involved in cell proliferation, including cell cycling, differentiation and apoptosis, and uses different modes of RNA stem-loop binding to exert either translational activation or repression. This chain is Eukaryotic translation initiation factor 3 subunit I, found in Pongo abelii (Sumatran orangutan).